A 215-amino-acid polypeptide reads, in one-letter code: Large ribosomal subunit protein uL3 (215 aa).

The segment at 136–155 (GVSISHRSHGSTGQRQDPGK) is disordered. Gln151 is subject to N5-methylglutamine.

Belongs to the universal ribosomal protein uL3 family. As to quaternary structure, part of the 50S ribosomal subunit. Forms a cluster with proteins L14 and L19. In terms of processing, methylated by PrmB.

Its function is as follows. One of the primary rRNA binding proteins, it binds directly near the 3'-end of the 23S rRNA, where it nucleates assembly of the 50S subunit. The protein is Large ribosomal subunit protein uL3 of Rickettsia africae (strain ESF-5).